The following is a 465-amino-acid chain: Cysteine--tRNA ligase (465 aa).

Cysteine 27 contacts Zn(2+). The short motif at 29–39 (PTVYDDAHLGH) is the 'HIGH' region element. Residues cysteine 207, histidine 237, and glutamate 241 each coordinate Zn(2+). A 'KMSKS' region motif is present at residues 269 to 273 (KMSKS). Residue lysine 272 participates in ATP binding.

The protein belongs to the class-I aminoacyl-tRNA synthetase family. Monomer. The cofactor is Zn(2+).

It localises to the cytoplasm. It catalyses the reaction tRNA(Cys) + L-cysteine + ATP = L-cysteinyl-tRNA(Cys) + AMP + diphosphate. This Helicobacter acinonychis (strain Sheeba) protein is Cysteine--tRNA ligase.